A 426-amino-acid polypeptide reads, in one-letter code: Enolase (426 aa).

Gln-163 is a (2R)-2-phosphoglycerate binding site. Glu-205 (proton donor) is an active-site residue. Positions 242, 285, and 312 each coordinate Mg(2+). Positions 337, 366, 367, and 388 each coordinate (2R)-2-phosphoglycerate. Lys-337 (proton acceptor) is an active-site residue.

This sequence belongs to the enolase family. It depends on Mg(2+) as a cofactor.

It is found in the cytoplasm. Its subcellular location is the secreted. The protein resides in the cell surface. The catalysed reaction is (2R)-2-phosphoglycerate = phosphoenolpyruvate + H2O. Its pathway is carbohydrate degradation; glycolysis; pyruvate from D-glyceraldehyde 3-phosphate: step 4/5. Catalyzes the reversible conversion of 2-phosphoglycerate (2-PG) into phosphoenolpyruvate (PEP). It is essential for the degradation of carbohydrates via glycolysis. The polypeptide is Enolase (Phenylobacterium zucineum (strain HLK1)).